The following is a 250-amino-acid chain: GTP cyclohydrolase 1 type 2 homolog (250 aa).

A divalent metal cation is bound by residues His-63, His-64, Asp-100, His-218, and Glu-222.

The protein belongs to the GTP cyclohydrolase I type 2/NIF3 family. As to quaternary structure, homohexamer.

The protein is GTP cyclohydrolase 1 type 2 homolog of Pyrococcus horikoshii (strain ATCC 700860 / DSM 12428 / JCM 9974 / NBRC 100139 / OT-3).